A 371-amino-acid polypeptide reads, in one-letter code: Neuropeptide S receptor (371 aa).

At 1–52 the chain is on the extracellular side; sequence MPANLTEGSFHANQTVPMLDSSPVACTEIVTFTEALVAEEWGSFYSSFKTEQ. 2 N-linked (GlcNAc...) asparagine glycosylation sites follow: asparagine 4 and asparagine 13. The helical transmembrane segment at 53–73 threads the bilayer; that stretch reads LITLWVLFVVTIVGNSVVLFS. The Cytoplasmic portion of the chain corresponds to 74 to 82; that stretch reads TCRRKRKSR. A helical membrane pass occupies residues 83 to 103; the sequence is MTFFVTQLAITDSFTGLINIL. At 104–123 the chain is on the extracellular side; the sequence is TDIIWRFTGDFMAPDLVCRV. An intrachain disulfide couples cysteine 121 to cysteine 197. A helical membrane pass occupies residues 124-144; it reads VRYLQVVLLYASTYVLVSLSI. At 145–164 the chain is on the cytoplasmic side; it reads DRYHAIVYPMKFLQGEKQAK. Residues 165–185 form a helical membrane-spanning segment; it reads VLIGIAWSLSFLFSIPTLIIF. Topologically, residues 186–212 are extracellular; that stretch reads GKRTLSNGEVQCWALWPDDSYWTPYMT. A helical membrane pass occupies residues 213-233; the sequence is IVAFLVYFIPLAIISVIYGLV. At 234 to 275 the chain is on the cytoplasmic side; the sequence is IRTIWMKSKTHETVISNCSDGKLCCSYNRGLISKAKIKAIKY. The chain crosses the membrane as a helical span at residues 276 to 296; it reads SIVIILAFICCWSPYFLFDIL. Topologically, residues 297–312 are extracellular; the sequence is DNFNVLPDTKERFYAS. The helical transmembrane segment at 313–333 threads the bilayer; that stretch reads VIIQNLPALNSAINPLIYCIF. Residues 334–371 lie on the Cytoplasmic side of the membrane; sequence SSSICSPCKMQRSQDSRMTYRERSERHEMQILSKPEFI.

The protein belongs to the G-protein coupled receptor 1 family. Vasopressin/oxytocin receptor subfamily.

It localises to the cell membrane. Its function is as follows. G-protein coupled receptor for neuropeptide S (NPS). Promotes mobilization of intracellular Ca(2+) stores. Inhibits cell growth in response to NPS binding. Involved in pathogenesis of asthma and other IgE-mediated diseases. The chain is Neuropeptide S receptor (Npsr1) from Mus musculus (Mouse).